A 496-amino-acid chain; its full sequence is Aspartyl/glutamyl-tRNA(Asn/Gln) amidotransferase subunit B (496 aa).

The protein belongs to the GatB/GatE family. GatB subfamily. Heterotrimer of A, B and C subunits.

It catalyses the reaction L-glutamyl-tRNA(Gln) + L-glutamine + ATP + H2O = L-glutaminyl-tRNA(Gln) + L-glutamate + ADP + phosphate + H(+). The enzyme catalyses L-aspartyl-tRNA(Asn) + L-glutamine + ATP + H2O = L-asparaginyl-tRNA(Asn) + L-glutamate + ADP + phosphate + 2 H(+). Allows the formation of correctly charged Asn-tRNA(Asn) or Gln-tRNA(Gln) through the transamidation of misacylated Asp-tRNA(Asn) or Glu-tRNA(Gln) in organisms which lack either or both of asparaginyl-tRNA or glutaminyl-tRNA synthetases. The reaction takes place in the presence of glutamine and ATP through an activated phospho-Asp-tRNA(Asn) or phospho-Glu-tRNA(Gln). In Xanthobacter autotrophicus (strain ATCC BAA-1158 / Py2), this protein is Aspartyl/glutamyl-tRNA(Asn/Gln) amidotransferase subunit B.